We begin with the raw amino-acid sequence, 139 residues long: Cytochrome c2 (139 aa).

Residues 1–25 (MVKKLLTILSIAATAGSLSIGTASA) form the signal peptide. Glutamine 26 is subject to Pyrrolidone carboxylic acid. Residues cysteine 38, cysteine 41, histidine 42, and methionine 118 each contribute to the heme c site.

The protein belongs to the cytochrome c family. Binds 1 heme c group covalently per subunit.

Functionally, cytochrome c2 is found mainly in purple, non-sulfur, photosynthetic bacteria where it functions as the electron donor to the oxidized bacteriochlorophyll in the photophosphorylation pathway. However, it may also have a role in the respiratory chain and is found in some non-photosynthetic bacteria. This Rhodopseudomonas palustris (strain ATCC BAA-98 / CGA009) protein is Cytochrome c2 (cycA).